We begin with the raw amino-acid sequence, 270 residues long: Sulfur carrier protein FdhD (270 aa).

2 stretches are compositionally biased toward basic and acidic residues: residues 1–10 (MSMQDHDRTE) and 20–30 (RHLDGSSRPDW). The interval 1-30 (MSMQDHDRTEQGMTSLAVTRHLDGSSRPDW) is disordered. The Cysteine persulfide intermediate role is filled by cysteine 117.

It belongs to the FdhD family.

Its subcellular location is the cytoplasm. In terms of biological role, required for formate dehydrogenase (FDH) activity. Acts as a sulfur carrier protein that transfers sulfur from IscS to the molybdenum cofactor prior to its insertion into FDH. This is Sulfur carrier protein FdhD from Chromobacterium violaceum (strain ATCC 12472 / DSM 30191 / JCM 1249 / CCUG 213 / NBRC 12614 / NCIMB 9131 / NCTC 9757 / MK).